We begin with the raw amino-acid sequence, 1337 residues long: ABC transporter D family member 1 (1337 aa).

Helical transmembrane passes span 24–44 (ILLAAGIVAAGGTAVYLKSRV), 142–162 (APLFLRLISENIMLCFMLSTL), 247–267 (YASPKYIFWILAYVLGAGTAI), and 342–362 (FLLKYLGATVAVILIIEPFFS). The ABC transmembrane type-1 1 domain maps to 117–395 (VFRTALSNRL…SVIISLFQAL (279 aa)). In terms of domain architecture, ABC transporter 1 spans 448–695 (VEFSDVKVVT…DAMVVQRAFA (248 aa)). Residue 481–488 (GPNGSGKS) participates in ATP binding. Residues 751 to 1049 (LIPTIFDKQG…VVSQSFMAFG (299 aa)) enclose the ABC transmembrane type-1 2 domain. A helical membrane pass occupies residues 900 to 920 (LLTGQRGVAILYTYMLLGLGF). The region spanning 1091–1337 (LDSQDLLSFS…ELRSIEQTTE (247 aa)) is the ABC transporter 2 domain. 1130 to 1137 (GPNGSGKT) serves as a coordination point for ATP.

Belongs to the ABC transporter superfamily. ABCD family. Peroxisomal fatty acyl CoA transporter (TC 3.A.1.203) subfamily.

The protein resides in the peroxisome membrane. Its subcellular location is the glyoxysome membrane. The enzyme catalyses an acyl-CoA(out) + ATP + H2O = an acyl-CoA(in) + ADP + phosphate + H(+). Contributes to the transport of fatty acids and their derivatives (acyl CoAs) across the peroxisomal membrane. Provides acetate to the glyoxylate cycle in developing seedlings. Involved in pollen tube elongation, ovule fertilization, and seeds germination after imbibition (controls the switch between the opposing developmental programs of dormancy and germination), probably by promoting beta-oxidation of storage lipids during gluconeogenesis. Required for biosynthesis of jasmonic acid and conversion of indole butyric acid to indole acetic acid. Confers sensitivity to monofluoroacetic acid (FAc), a toxic acetate analog, and to 2,4-dichlorophenoxybutyric acid (2,4-DB) and indole-3-butyric acid (IBA), two precursors of auxin after beta-oxidation. This Arabidopsis thaliana (Mouse-ear cress) protein is ABC transporter D family member 1.